The chain runs to 142 residues: Hemoglobin subunit zeta (142 aa).

Position 2 is an N-acetylserine (serine 2). The Globin domain occupies 2–142; sequence SLTKTERTII…VSSVLTEKYR (141 aa). Threonine 29 bears the Phosphothreonine mark. Serine 53 carries the phosphoserine modification. Histidine 59 serves as a coordination point for heme b. Phosphoserine occurs at positions 73 and 82. Residue histidine 88 coordinates heme b.

It belongs to the globin family. In terms of assembly, heterotetramer of two zeta chains and two epsilon chains in early embryonic hemoglobin Gower-1; two zeta chains and two gamma chains in fetal hemoglobin Portland-1. Heterotetramer of two zeta chains and two beta chains in hemoglobin Portland-2, detected in fetuses and neonates with homozygous alpha-thalassemia. In terms of tissue distribution, detected in fetal erythrocytes (at protein level).

Functionally, the zeta chain is an alpha-type chain of mammalian embryonic hemoglobin. The protein is Hemoglobin subunit zeta (HBZ) of Homo sapiens (Human).